Consider the following 362-residue polypeptide: D-alanine--D-alanine ligase (362 aa).

The ATP-grasp domain occupies 134 to 345; sequence KILAQRAGVP…YPDLITRLIR (212 aa). Residue 170–225 coordinates ATP; sequence GQLGTSNLFVKPSNQGSSVGITHVTDDSNYAEALAEAFKYDDKVLVEEGIVGTEVE. 3 residues coordinate Mg(2+): D298, E312, and N314.

Belongs to the D-alanine--D-alanine ligase family. Mg(2+) is required as a cofactor. Requires Mn(2+) as cofactor.

It localises to the cytoplasm. The catalysed reaction is 2 D-alanine + ATP = D-alanyl-D-alanine + ADP + phosphate + H(+). It functions in the pathway cell wall biogenesis; peptidoglycan biosynthesis. Its function is as follows. Cell wall formation. This Lactobacillus delbrueckii subsp. bulgaricus (strain ATCC BAA-365 / Lb-18) protein is D-alanine--D-alanine ligase.